Consider the following 176-residue polypeptide: Nuclear transcription factor Y subunit B-10 (176 aa).

Residues 1-15 are compositionally biased toward gly residues; sequence MAESQTGGGGGGSHE. Positions 1 to 29 are disordered; that stretch reads MAESQTGGGGGGSHESGGDQSPRSLNVRE. Alanine 2 is subject to N-acetylalanine. Residues 34–40 mediate DNA binding; sequence LPIANIS. The interval 61 to 72 is subunit association domain (SAD); that stretch reads MQECVSEFISFV. Positions 121–176 are disordered; the sequence is GDTKGSGKGGESSAKRDGQPSQVSQFSQVPQQGSFSQGPYGNSQGSNMMVQMPGTE. Over residues 139–159 the composition is skewed to low complexity; that stretch reads QPSQVSQFSQVPQQGSFSQGP. Polar residues predominate over residues 160–169; that stretch reads YGNSQGSNMM.

This sequence belongs to the NFYB/HAP3 subunit family. As to quaternary structure, heterotrimeric transcription factor composed of three components, NF-YA, NF-YB and NF-YC. NF-YB and NF-YC must interact and dimerize for NF-YA association and DNA binding. As to expression, expressed in the whole plant, except roots.

The protein localises to the nucleus. Component of the NF-Y/HAP transcription factor complex. The NF-Y complex stimulates the transcription of various genes by recognizing and binding to a CCAAT motif in promoters. This is Nuclear transcription factor Y subunit B-10 (NFYB10) from Arabidopsis thaliana (Mouse-ear cress).